Reading from the N-terminus, the 413-residue chain is Transcription factor E2F4 (413 aa).

Residues 1 to 20 (MAEAGPQAPPPPGTPSRHEK) form a disordered region. At Ala-2 the chain carries N-acetylalanine. A DNA-binding region spans residues 16 to 85 (SRHEKSLGLL…KNSIQWKGVG (70 aa)). Residues 43–65 (LKLAADTLAVRQKRRIYDITNVL) form a leucine-zipper region. The DEF box motif lies at 48 to 85 (DTLAVRQKRRIYDITNVLEGIGLIEKKSKNSIQWKGVG). The segment at 86-181 (PGCNTREIAD…GLNGQKKYQI (96 aa)) is dimerization. The interval 211–340 (PPEDLLQSPS…PSTSFEPIKA (130 aa)) is disordered. Polar residues-rich tracts occupy residues 234–249 (AQSQ…QLTP) and 293–306 (TLDT…ALLD). Low complexity predominate over residues 307-327 (SSSSSSSSSSSSSNSNSSSSS). Residues 337-413 (PIKADPTGVL…DLFDVPVLNL (77 aa)) form a transactivation region. A Phosphoserine modification is found at Ser-384. Residues 389 to 392 (DHDY) carry the HCFC1-binding-motif (HBM) motif. The interval 390-407 (HDYIYNLDESEGVCDLFD) is interaction with RBL1 and RBL2.

The protein belongs to the E2F/DP family. Component of the DRTF1/E2F transcription factor complex. Binds cooperatively with TFDP1/Dp-1 to E2F sites. The E2F4/TFDP1 dimer interacts preferentially with pocket protein RBL1, which inhibits the E2F transactivation domain. Lower affinity interaction has been found with retinoblastoma protein RB1. Interacts with TRRAP, which probably mediates its interaction with histone acetyltransferase complexes, leading to transcription activation. Interacts with HCFC1. Component of the DREAM complex (also named LINC complex) at least composed of E2F4, E2F5, LIN9, LIN37, LIN52, LIN54, MYBL1, MYBL2, RBL1, RBL2, RBBP4, TFDP1 and TFDP2. The complex exists in quiescent cells where it represses cell cycle-dependent genes. It dissociates in S phase when LIN9, LIN37, LIN52 and LIN54 form a subcomplex that binds to MYBL2. Interacts with PML (isoform PML-1, isoform PML-2, isoform PML-3, isoform PML-4 and isoform PML-5). Interacts with CEBPA (when phosphorylated). Differentially phosphorylated in vivo. As to expression, found in all tissue examined including heart, brain, placenta, lung, liver, skeletal muscle, kidney and pancreas.

It is found in the nucleus. Transcription activator that binds DNA cooperatively with DP proteins through the E2 recognition site, 5'-TTTC[CG]CGC-3' found in the promoter region of a number of genes whose products are involved in cell cycle regulation or in DNA replication. The DRTF1/E2F complex functions in the control of cell-cycle progression from G1 to S phase. E2F4 binds with high affinity to RBL1 and RBL2. In some instances can also bind RB1. Specifically required for multiciliate cell differentiation: together with MCIDAS and E2F5, binds and activate genes required for centriole biogenesis. The protein is Transcription factor E2F4 (E2F4) of Homo sapiens (Human).